Reading from the N-terminus, the 245-residue chain is Cell division protein ZapD (245 aa).

It belongs to the ZapD family. As to quaternary structure, interacts with FtsZ.

Its subcellular location is the cytoplasm. Functionally, cell division factor that enhances FtsZ-ring assembly. Directly interacts with FtsZ and promotes bundling of FtsZ protofilaments, with a reduction in FtsZ GTPase activity. In Photobacterium profundum (strain SS9), this protein is Cell division protein ZapD.